Here is an 88-residue protein sequence, read N- to C-terminus: Small ribosomal subunit protein bS16 (88 aa).

It belongs to the bacterial ribosomal protein bS16 family.

The protein is Small ribosomal subunit protein bS16 of Anaeromyxobacter dehalogenans (strain 2CP-1 / ATCC BAA-258).